We begin with the raw amino-acid sequence, 538 residues long: Putative cysteine ligase BshC (538 aa).

Residues 460-483 adopt a coiled-coil conformation; the sequence is KINEQIELLEKMLKRNVEKKHEVQ.

The protein belongs to the BshC family.

Functionally, involved in bacillithiol (BSH) biosynthesis. May catalyze the last step of the pathway, the addition of cysteine to glucosamine malate (GlcN-Mal) to generate BSH. The protein is Putative cysteine ligase BshC of Bacillus mycoides (strain KBAB4) (Bacillus weihenstephanensis).